The primary structure comprises 333 residues: Ketol-acid reductoisomerase (NADP(+)) (333 aa).

The KARI N-terminal Rossmann domain maps to 2–182 (ANIYYDSDCD…GGGRAGILET (181 aa)). NADP(+)-binding positions include 25–28 (YGSQ), Lys48, Ser51, Ser53, and 83–86 (DTIQ). The active site involves His108. Position 134 (Gly134) interacts with NADP(+). A KARI C-terminal knotted domain is found at 183 to 331 (SFREETETDL…KKLRSMMKWL (149 aa)). Positions 191, 195, 227, and 231 each coordinate Mg(2+). Ser252 contributes to the substrate binding site.

Belongs to the ketol-acid reductoisomerase family. It depends on Mg(2+) as a cofactor.

It catalyses the reaction (2R)-2,3-dihydroxy-3-methylbutanoate + NADP(+) = (2S)-2-acetolactate + NADPH + H(+). The enzyme catalyses (2R,3R)-2,3-dihydroxy-3-methylpentanoate + NADP(+) = (S)-2-ethyl-2-hydroxy-3-oxobutanoate + NADPH + H(+). It participates in amino-acid biosynthesis; L-isoleucine biosynthesis; L-isoleucine from 2-oxobutanoate: step 2/4. Its pathway is amino-acid biosynthesis; L-valine biosynthesis; L-valine from pyruvate: step 2/4. In terms of biological role, involved in the biosynthesis of branched-chain amino acids (BCAA). Catalyzes an alkyl-migration followed by a ketol-acid reduction of (S)-2-acetolactate (S2AL) to yield (R)-2,3-dihydroxy-isovalerate. In the isomerase reaction, S2AL is rearranged via a Mg-dependent methyl migration to produce 3-hydroxy-3-methyl-2-ketobutyrate (HMKB). In the reductase reaction, this 2-ketoacid undergoes a metal-dependent reduction by NADPH to yield (R)-2,3-dihydroxy-isovalerate. The sequence is that of Ketol-acid reductoisomerase (NADP(+)) from Leptospira interrogans serogroup Icterohaemorrhagiae serovar copenhageni (strain Fiocruz L1-130).